Consider the following 171-residue polypeptide: Adenine phosphoribosyltransferase (171 aa).

The protein belongs to the purine/pyrimidine phosphoribosyltransferase family. As to quaternary structure, homodimer.

Its subcellular location is the cytoplasm. The catalysed reaction is AMP + diphosphate = 5-phospho-alpha-D-ribose 1-diphosphate + adenine. Its pathway is purine metabolism; AMP biosynthesis via salvage pathway; AMP from adenine: step 1/1. In terms of biological role, catalyzes a salvage reaction resulting in the formation of AMP, that is energically less costly than de novo synthesis. This chain is Adenine phosphoribosyltransferase, found in Geotalea uraniireducens (strain Rf4) (Geobacter uraniireducens).